We begin with the raw amino-acid sequence, 248 residues long: UDP-2,3-diacylglucosamine hydrolase (248 aa).

The Mn(2+) site is built by aspartate 7, histidine 9, aspartate 40, asparagine 78, and histidine 113. 78-79 contacts substrate; that stretch reads NR. Positions 121, 159, 163, 166, and 194 each coordinate substrate. Mn(2+) is bound by residues histidine 194 and histidine 196.

Belongs to the LpxH family. It depends on Mn(2+) as a cofactor.

Its subcellular location is the cell inner membrane. The catalysed reaction is UDP-2-N,3-O-bis[(3R)-3-hydroxytetradecanoyl]-alpha-D-glucosamine + H2O = 2-N,3-O-bis[(3R)-3-hydroxytetradecanoyl]-alpha-D-glucosaminyl 1-phosphate + UMP + 2 H(+). Its pathway is glycolipid biosynthesis; lipid IV(A) biosynthesis; lipid IV(A) from (3R)-3-hydroxytetradecanoyl-[acyl-carrier-protein] and UDP-N-acetyl-alpha-D-glucosamine: step 4/6. Functionally, hydrolyzes the pyrophosphate bond of UDP-2,3-diacylglucosamine to yield 2,3-diacylglucosamine 1-phosphate (lipid X) and UMP by catalyzing the attack of water at the alpha-P atom. Involved in the biosynthesis of lipid A, a phosphorylated glycolipid that anchors the lipopolysaccharide to the outer membrane of the cell. This Pseudomonas syringae pv. syringae (strain B728a) protein is UDP-2,3-diacylglucosamine hydrolase.